The chain runs to 939 residues: Isoleucine--tRNA ligase (939 aa).

The short motif at 57–67 is the 'HIGH' region element; it reads PYANGHIHIGH. Glutamate 563 is a binding site for L-isoleucyl-5'-AMP. The 'KMSKS' region motif lies at 604–608; the sequence is KMSKS. An ATP-binding site is contributed by lysine 607. Residues cysteine 903, cysteine 906, cysteine 921, and cysteine 924 each coordinate Zn(2+).

Belongs to the class-I aminoacyl-tRNA synthetase family. IleS type 1 subfamily. In terms of assembly, monomer. Zn(2+) serves as cofactor.

The protein localises to the cytoplasm. The catalysed reaction is tRNA(Ile) + L-isoleucine + ATP = L-isoleucyl-tRNA(Ile) + AMP + diphosphate. Functionally, catalyzes the attachment of isoleucine to tRNA(Ile). As IleRS can inadvertently accommodate and process structurally similar amino acids such as valine, to avoid such errors it has two additional distinct tRNA(Ile)-dependent editing activities. One activity is designated as 'pretransfer' editing and involves the hydrolysis of activated Val-AMP. The other activity is designated 'posttransfer' editing and involves deacylation of mischarged Val-tRNA(Ile). The sequence is that of Isoleucine--tRNA ligase from Sulfurihydrogenibium sp. (strain YO3AOP1).